Consider the following 72-residue polypeptide: Translation initiation factor IF-1 (72 aa).

Positions 1-72 constitute an S1-like domain; it reads MAKEDSIRMQ…NKGRIVYRER (72 aa).

Belongs to the IF-1 family. Component of the 30S ribosomal translation pre-initiation complex which assembles on the 30S ribosome in the order IF-2 and IF-3, IF-1 and N-formylmethionyl-tRNA(fMet); mRNA recruitment can occur at any time during PIC assembly.

It localises to the cytoplasm. Functionally, one of the essential components for the initiation of protein synthesis. Stabilizes the binding of IF-2 and IF-3 on the 30S subunit to which N-formylmethionyl-tRNA(fMet) subsequently binds. Helps modulate mRNA selection, yielding the 30S pre-initiation complex (PIC). Upon addition of the 50S ribosomal subunit IF-1, IF-2 and IF-3 are released leaving the mature 70S translation initiation complex. The sequence is that of Translation initiation factor IF-1 from Halorhodospira halophila (strain DSM 244 / SL1) (Ectothiorhodospira halophila (strain DSM 244 / SL1)).